The chain runs to 416 residues: Tryptophan synthase beta chain (416 aa).

Lys-109 is modified (N6-(pyridoxal phosphate)lysine).

This sequence belongs to the TrpB family. Tetramer of two alpha and two beta chains. Pyridoxal 5'-phosphate serves as cofactor.

It catalyses the reaction (1S,2R)-1-C-(indol-3-yl)glycerol 3-phosphate + L-serine = D-glyceraldehyde 3-phosphate + L-tryptophan + H2O. The protein operates within amino-acid biosynthesis; L-tryptophan biosynthesis; L-tryptophan from chorismate: step 5/5. Functionally, the beta subunit is responsible for the synthesis of L-tryptophan from indole and L-serine. The protein is Tryptophan synthase beta chain of Mesorhizobium japonicum (strain LMG 29417 / CECT 9101 / MAFF 303099) (Mesorhizobium loti (strain MAFF 303099)).